Here is a 486-residue protein sequence, read N- to C-terminus: N-succinylglutamate 5-semialdehyde dehydrogenase (486 aa).

Position 221-226 (221-226 (GSSATG)) interacts with NAD(+). Active-site residues include E244 and C278.

This sequence belongs to the aldehyde dehydrogenase family. AstD subfamily.

It carries out the reaction N-succinyl-L-glutamate 5-semialdehyde + NAD(+) + H2O = N-succinyl-L-glutamate + NADH + 2 H(+). The protein operates within amino-acid degradation; L-arginine degradation via AST pathway; L-glutamate and succinate from L-arginine: step 4/5. Catalyzes the NAD-dependent reduction of succinylglutamate semialdehyde into succinylglutamate. This is N-succinylglutamate 5-semialdehyde dehydrogenase from Chromobacterium violaceum (strain ATCC 12472 / DSM 30191 / JCM 1249 / CCUG 213 / NBRC 12614 / NCIMB 9131 / NCTC 9757 / MK).